The sequence spans 166 residues: 2-amino-4-hydroxy-6-hydroxymethyldihydropteridine pyrophosphokinase (166 aa).

This sequence belongs to the HPPK family.

It carries out the reaction 6-hydroxymethyl-7,8-dihydropterin + ATP = (7,8-dihydropterin-6-yl)methyl diphosphate + AMP + H(+). It participates in cofactor biosynthesis; tetrahydrofolate biosynthesis; 2-amino-4-hydroxy-6-hydroxymethyl-7,8-dihydropteridine diphosphate from 7,8-dihydroneopterin triphosphate: step 4/4. Its function is as follows. Catalyzes the transfer of pyrophosphate from adenosine triphosphate (ATP) to 6-hydroxymethyl-7,8-dihydropterin, an enzymatic step in folate biosynthesis pathway. This chain is 2-amino-4-hydroxy-6-hydroxymethyldihydropteridine pyrophosphokinase (folK), found in Streptococcus pyogenes serotype M6 (strain ATCC BAA-946 / MGAS10394).